The chain runs to 120 residues: Large ribosomal subunit protein bL20 (120 aa).

The protein belongs to the bacterial ribosomal protein bL20 family.

Functionally, binds directly to 23S ribosomal RNA and is necessary for the in vitro assembly process of the 50S ribosomal subunit. It is not involved in the protein synthesizing functions of that subunit. This chain is Large ribosomal subunit protein bL20, found in Methylobacillus flagellatus (strain ATCC 51484 / DSM 6875 / VKM B-1610 / KT).